A 149-amino-acid chain; its full sequence is D-aminoacyl-tRNA deacylase (149 aa).

A Gly-cisPro motif, important for rejection of L-amino acids motif is present at residues 137–138 (GP).

This sequence belongs to the DTD family. As to quaternary structure, homodimer.

It localises to the cytoplasm. It carries out the reaction glycyl-tRNA(Ala) + H2O = tRNA(Ala) + glycine + H(+). It catalyses the reaction a D-aminoacyl-tRNA + H2O = a tRNA + a D-alpha-amino acid + H(+). In terms of biological role, an aminoacyl-tRNA editing enzyme that deacylates mischarged D-aminoacyl-tRNAs. Also deacylates mischarged glycyl-tRNA(Ala), protecting cells against glycine mischarging by AlaRS. Acts via tRNA-based rather than protein-based catalysis; rejects L-amino acids rather than detecting D-amino acids in the active site. By recycling D-aminoacyl-tRNA to D-amino acids and free tRNA molecules, this enzyme counteracts the toxicity associated with the formation of D-aminoacyl-tRNA entities in vivo and helps enforce protein L-homochirality. This Halothermothrix orenii (strain H 168 / OCM 544 / DSM 9562) protein is D-aminoacyl-tRNA deacylase.